Here is a 110-residue protein sequence, read N- to C-terminus: MSMTDVLSAEDIKKAIGAFAAADSFDHKKFFQMVGLKKKNPDEVKKVFHILDKDKSGFIEEDELGSILKGFSSDARDLSAKETKTLLAAGDKDGDGKIGVEEFSTLVAES.

Position 2 is an N-acetylserine (serine 2). Serine 2, serine 8, and serine 24 each carry phosphoserine. EF-hand domains follow at residues 39 to 74 and 78 to 110; these read KNPD…FSSD and LSAK…VAES. Ca(2+) is bound by residues aspartate 52, aspartate 54, serine 56, phenylalanine 58, glutamate 60, glutamate 63, aspartate 91, aspartate 93, aspartate 95, lysine 97, and glutamate 102.

As to expression, expressed in the modiolar nerve root (at protein level).

In muscle, parvalbumin is thought to be involved in relaxation after contraction. It binds two calcium ions. The polypeptide is Parvalbumin alpha (Pvalb) (Mus musculus (Mouse)).